The sequence spans 211 residues: Large ribosomal subunit protein bL25 (211 aa).

The protein belongs to the bacterial ribosomal protein bL25 family. CTC subfamily. In terms of assembly, part of the 50S ribosomal subunit; part of the 5S rRNA/L5/L18/L25 subcomplex. Contacts the 5S rRNA. Binds to the 5S rRNA independently of L5 and L18.

Its function is as follows. This is one of the proteins that binds to the 5S RNA in the ribosome where it forms part of the central protuberance. This Methylobacterium nodulans (strain LMG 21967 / CNCM I-2342 / ORS 2060) protein is Large ribosomal subunit protein bL25.